Here is a 414-residue protein sequence, read N- to C-terminus: L-cysteine:1D-myo-inositol 2-amino-2-deoxy-alpha-D-glucopyranoside ligase (414 aa).

C43 serves as a coordination point for Zn(2+). L-cysteinyl-5'-AMP-binding positions include C43–T46, T58, and N81–T83. A 'HIGH' region motif is present at residues I45–H55. The 'ERGGDP' region motif lies at E187–P192. An L-cysteinyl-5'-AMP-binding site is contributed by W227. C231 contacts Zn(2+). G249 to D251 is a binding site for L-cysteinyl-5'-AMP. H256 lines the Zn(2+) pocket. Residue I283 participates in L-cysteinyl-5'-AMP binding. Positions K289 to S293 match the 'KMSKS' region motif.

The protein belongs to the class-I aminoacyl-tRNA synthetase family. MshC subfamily. As to quaternary structure, monomer. Zn(2+) serves as cofactor.

The catalysed reaction is 1D-myo-inositol 2-amino-2-deoxy-alpha-D-glucopyranoside + L-cysteine + ATP = 1D-myo-inositol 2-(L-cysteinylamino)-2-deoxy-alpha-D-glucopyranoside + AMP + diphosphate + H(+). Functionally, catalyzes the ATP-dependent condensation of GlcN-Ins and L-cysteine to form L-Cys-GlcN-Ins. This Tsukamurella paurometabola (strain ATCC 8368 / DSM 20162 / CCUG 35730 / CIP 100753 / JCM 10117 / KCTC 9821 / NBRC 16120 / NCIMB 702349 / NCTC 13040) (Corynebacterium paurometabolum) protein is L-cysteine:1D-myo-inositol 2-amino-2-deoxy-alpha-D-glucopyranoside ligase.